Here is a 1004-residue protein sequence, read N- to C-terminus: Kinesin-like protein KIN-7I (1004 aa).

In terms of domain architecture, Kinesin motor spans 6-326; it reads KILVSVRVRP…LLFATCAKEV (321 aa). 89–96 is an ATP binding site; sequence GQTSSGKT. Coiled-coil stretches lie at residues 335–402, 517–576, and 634–661; these read VVSE…AQSR, KKEY…QKQS, and SVEK…DQSE. 3 disordered regions span residues 567–599, 628–671, and 802–830; these read EQSV…KSLP, SQQT…PEDE, and TMQH…GEKT. Composition is skewed to basic and acidic residues over residues 569–582 and 634–652; these read SVEK…KEEM and SVEK…EDLK. Polar residues predominate over residues 653 to 663; the sequence is QNLSMDQSEQL. Residue Lys-881 forms a Glycyl lysine isopeptide (Lys-Gly) (interchain with G-Cter in ubiquitin) linkage.

It belongs to the TRAFAC class myosin-kinesin ATPase superfamily. Kinesin family. KIN-7 subfamily.

The protein is Kinesin-like protein KIN-7I of Arabidopsis thaliana (Mouse-ear cress).